The chain runs to 103 residues: uncharacterized protein (103 aa).

Positions 69 to 103 (SSISYPGGGGGGGGSAKSLSSSKPGGGGGSPLIFL) are disordered. 2 stretches are compositionally biased toward gly residues: residues 74-83 (PGGGGGGGGS) and 92-103 (PGGGGGSPLIFL).

This is an uncharacterized protein from Saccharomyces cerevisiae (strain ATCC 204508 / S288c) (Baker's yeast).